Consider the following 424-residue polypeptide: Endo-beta-1,4-galactanase (424 aa).

The first 26 residues, 1-26 (MKNVLAVFVVLIFVLGAFGTSGPAEA), serve as a signal peptide directing secretion. Residue 142–145 (DPAK) participates in substrate binding. Catalysis depends on Glu190, which acts as the Proton donor. Substrate-binding positions include 229–230 (TN) and His263. Glu288 functions as the Nucleophile in the catalytic mechanism. Thr292 is a binding site for substrate. Ca(2+) contacts are provided by Asp297, Asp299, His301, and Asn303. Residues Lys307 and Asp384 each contribute to the substrate site. Residues Ser392 and Asp395 each coordinate Ca(2+).

The protein belongs to the glycosyl hydrolase 53 family. It depends on Ca(2+) as a cofactor.

The enzyme catalyses The enzyme specifically hydrolyzes (1-&gt;4)-beta-D-galactosidic linkages in type I arabinogalactans.. In terms of biological role, involved in galactan degradation. Degrades arabinose-free galactan to galactooligosaccharides, producing galactotetraose as the main product along with galactotriose, galactobiose, and galactose. May hydrolyze the beta-1,4-galactan linkages of the galactan portion of arabinogalactan type I, a pectic plant polysaccharide from which most of the arabinose has been removed. The sequence is that of Endo-beta-1,4-galactanase (ganB) from Bacillus licheniformis (strain ATCC 14580 / DSM 13 / JCM 2505 / CCUG 7422 / NBRC 12200 / NCIMB 9375 / NCTC 10341 / NRRL NRS-1264 / Gibson 46).